The following is a 366-amino-acid chain: MQILAALSAIGALVATATAAAVPNAPAKQSMIDIQLSATGNTLIKATITNKGDKALNLLQFNTILDKNPTRKVRVYQNGTEVKFTGMLARYKMSNLSPDYFTTLGPKSSVESTFDIARTHDLTRGGKITVMASGTIPTAEGHGNGTSITGYARYESNKLELDVDAKKASSVAQAMGKVNKSRSTIDKRTNIDTSSCSQSQLEALEGALYNSAALAQAAAEAAPQSTDTVAEFFKSTSRNTIKTLVSRFQSVARESTYVNDGRTTYYCTDSMNGCSPGVLAYTLPDQNLIFNCPIYYSDLPPLAQSCYEQDQATTTLHEMTHNSAVVSPFCDDLGYGYDDATSLSASQALQNADSYALFANAIYLGC.

Positions 1 to 19 are cleaved as a signal peptide; it reads MQILAALSAIGALVATATA. Positions 20–188 are excised as a propeptide; it reads AAVPNAPAKQ…NKSRSTIDKR (169 aa). 2 disulfide bridges follow: Cys196/Cys267 and Cys274/Cys292. His317 is a Zn(2+) binding site. The active site involves Glu318. The Zn(2+) site is built by His321 and Asp332.

This sequence belongs to the peptidase M35 family. The cofactor is Zn(2+).

The protein resides in the secreted. The catalysed reaction is Preferential cleavage of bonds with hydrophobic residues in P1'. Also 3-Asn-|-Gln-4 and 8-Gly-|-Ser-9 bonds in insulin B chain.. Secreted metalloproteinase that allows assimilation of proteinaceous substrates. Shows high activities on basic nuclear substrates such as histone and protamine. May be involved in virulence. This chain is Neutral protease 2 homolog MGYG_04094, found in Arthroderma gypseum (strain ATCC MYA-4604 / CBS 118893) (Microsporum gypseum).